A 93-amino-acid polypeptide reads, in one-letter code: Mitochondrial import inner membrane translocase subunit TIM9 (93 aa).

A Twin CX3C motif motif is present at residues 43 to 67; the sequence is CFVDCVDSFTRKSLQKQEETCVMRC. Disulfide bonds link C43-C67 and C47-C63.

The protein belongs to the small Tim family. Heterohexamer; composed of 3 copies of TIM9 and 3 copies of TIM10, named soluble 70 kDa complex. The complex associates with the TIM22 component of the TIM22 complex. Interacts with multi-pass transmembrane proteins in transit. As to expression, expressed in roots, flowers, young cotyledons and leaves.

It is found in the mitochondrion intermembrane space. Functionally, mitochondrial intermembrane chaperone that participates in the import and insertion of multi-pass transmembrane proteins into the mitochondrial inner membrane. May also be required for the transfer of beta-barrel precursors from the TOM complex to the sorting and assembly machinery (SAM complex) of the outer membrane. Acts as a chaperone-like protein that protects the hydrophobic precursors from aggregation and guide them through the mitochondrial intermembrane space. This Arabidopsis thaliana (Mouse-ear cress) protein is Mitochondrial import inner membrane translocase subunit TIM9 (TIM9).